Reading from the N-terminus, the 1163-residue chain is Actin cross-linking toxin VgrG1 (1163 aa).

The region spanning 728–1163 (TPDFPTHFPK…NPQEWQRIIA (436 aa)) is the ACD domain. 739 to 743 (SIGIE) is a binding site for ATP. Positions 743 and 805 each coordinate Mg(2+). Position 808 (Ser-808) interacts with ATP. Gln-889 provides a ligand contact to Mg(2+). Arg-995 provides a ligand contact to ATP. Glu-1066 is a binding site for Mg(2+).

This sequence belongs to the VgrG protein family. As to quaternary structure, interacts with protein VC1417. Mg(2+) serves as cofactor.

The protein localises to the secreted. The protein resides in the host cytoplasm. It is found in the host cytosol. Part of the type VI secretion system (T6SS) specialized secretion system, which delivers several virulence factors in both prokaryotic and eukaryotic cells during infection. Forms the spike at the tip of the elongating tube probably formed by hemolysin co-regulated protein/Hcp. Allows the delivery of the TseL antibacterial toxin to target cells where it exerts its toxicity. Also acts directly as an actin-directed toxin that catalyzes the covalent cross-linking of host cytoplasmic monomeric actin. Mediates the cross-link between 'Lys-50' of one monomer and 'Glu-270' of another actin monomer, resulting in formation of highly toxic actin oligomers that cause cell rounding. The toxin can be highly efficient at very low concentrations by acting on formin homology family proteins: toxic actin oligomers bind with high affinity to formins and adversely affect both nucleation and elongation abilities of formins, causing their potent inhibition in both profilin-dependent and independent manners. Acts as an acid--amino-acid ligase that transfers the gamma-phosphoryl group of ATP to the 'Glu-270' actin residue, resulting in the formation of an activated acyl phosphate intermediate. This intermediate is further hydrolyzed and the energy of hydrolysis is utilized for the formation of the amide bond between actin subunits. The chain is Actin cross-linking toxin VgrG1 from Vibrio cholerae serotype O1 (strain ATCC 39315 / El Tor Inaba N16961).